The chain runs to 530 residues: Tryptophan 7-halogenase RebH (530 aa).

The FAD site is built by glycine 13, threonine 15, alanine 16, alanine 39, aspartate 41, glutamate 49, and alanine 50. Residue lysine 79 is part of the active site. FAD contacts are provided by valine 197 and threonine 348. L-tryptophan is bound at residue glutamate 357. Chloride-binding residues include threonine 359 and glycine 360. Residue isoleucine 361 coordinates FAD. Positions 454, 455, 461, and 465 each coordinate L-tryptophan.

This sequence belongs to the flavin-dependent halogenase family. Bacterial tryptophan halogenase subfamily. In terms of assembly, homodimer.

The catalysed reaction is L-tryptophan + FADH2 + chloride + O2 = 7-chloro-L-tryptophan + FAD + 2 H2O. Functionally, involved in the biosynthesis of the indolocarbazole antitumor agent rebeccamycin. Catalyzes the chlorination of tryptophan (Trp) at C7 position to yield 7-chlorotryptophan. It is also able to use bromide ions to generate monobrominated Trp. The chain is Tryptophan 7-halogenase RebH (rebH) from Lentzea aerocolonigenes (Lechevalieria aerocolonigenes).